We begin with the raw amino-acid sequence, 360 residues long: Phospho-N-acetylmuramoyl-pentapeptide-transferase (360 aa).

Transmembrane regions (helical) follow at residues 21 to 41 (YLSF…LWMG), 73 to 93 (TMGG…WADL), 94 to 114 (SNPY…VGFV), 132 to 152 (WKYF…YAHG), 168 to 188 (VMPQ…VGTS), 199 to 219 (GLAI…AWAT), 239 to 259 (LVVV…FNTY), 263 to 283 (VFMG…IAVL), 288 to 308 (LVLV…ILQV), and 338 to 358 (VIVR…ATLK).

Belongs to the glycosyltransferase 4 family. MraY subfamily. It depends on Mg(2+) as a cofactor.

It is found in the cell inner membrane. The enzyme catalyses UDP-N-acetyl-alpha-D-muramoyl-L-alanyl-gamma-D-glutamyl-meso-2,6-diaminopimeloyl-D-alanyl-D-alanine + di-trans,octa-cis-undecaprenyl phosphate = di-trans,octa-cis-undecaprenyl diphospho-N-acetyl-alpha-D-muramoyl-L-alanyl-D-glutamyl-meso-2,6-diaminopimeloyl-D-alanyl-D-alanine + UMP. The protein operates within cell wall biogenesis; peptidoglycan biosynthesis. Functionally, catalyzes the initial step of the lipid cycle reactions in the biosynthesis of the cell wall peptidoglycan: transfers peptidoglycan precursor phospho-MurNAc-pentapeptide from UDP-MurNAc-pentapeptide onto the lipid carrier undecaprenyl phosphate, yielding undecaprenyl-pyrophosphoryl-MurNAc-pentapeptide, known as lipid I. The polypeptide is Phospho-N-acetylmuramoyl-pentapeptide-transferase (Vibrio atlanticus (strain LGP32) (Vibrio splendidus (strain Mel32))).